The following is a 662-amino-acid chain: Glycogen debranching enzyme (662 aa).

Catalysis depends on aspartate 338, which acts as the Nucleophile. Residue glutamate 373 is the Proton donor of the active site.

Belongs to the glycosyl hydrolase 13 family.

It catalyses the reaction Hydrolysis of (1-&gt;6)-alpha-D-glucosidic linkages to branches with degrees of polymerization of three or four glucose residues in limit dextrin.. The protein operates within glycan degradation; glycogen degradation. In terms of biological role, removes maltotriose and maltotetraose chains that are attached by 1,6-alpha-linkage to the limit dextrin main chain, generating a debranched limit dextrin. The polypeptide is Glycogen debranching enzyme (Yersinia enterocolitica serotype O:8 / biotype 1B (strain NCTC 13174 / 8081)).